A 118-amino-acid polypeptide reads, in one-letter code: NLIQFKSIIECANRGSRRWLDYADYGCYCGWGGSGTPVDELDRCCKVHDECYGEAVKQGCFPKLTVYSWKCTENVPICDSRSKCKDFVCACDAAAAKCFAKAPYNKDNYNIDTKTRCQ.

Cystine bridges form between Cys11/Cys71, Cys27/Cys117, Cys29/Cys45, Cys44/Cys98, Cys51/Cys91, Cys60/Cys84, and Cys78/Cys89. Residues Tyr28, Gly30, and Gly32 each contribute to the Ca(2+) site. The active site involves His48. Ca(2+) is bound at residue Asp49. The active site involves Asp92.

It belongs to the phospholipase A2 family. Group I subfamily. D49 sub-subfamily. Ca(2+) is required as a cofactor. As to expression, expressed by the venom gland.

Its subcellular location is the secreted. The enzyme catalyses a 1,2-diacyl-sn-glycero-3-phosphocholine + H2O = a 1-acyl-sn-glycero-3-phosphocholine + a fatty acid + H(+). Its function is as follows. PLA2 catalyzes the calcium-dependent hydrolysis of the 2-acyl groups in 3-sn-phosphoglycerides. The polypeptide is Basic phospholipase A2 PA-9C (Pseudechis australis (Mulga snake)).